Consider the following 467-residue polypeptide: MIPITALKDKTVALFGLGGSGIATAKAIVAGGARIIAWDDNPDSVARAQSAGIATGDLRQADWSQFAVFVLSPGVPLTHPQPHWSVDLARAAGVEIIGDVELFVRERNHIAPDCPFIAITGTNGKSTTTALIAHIIKATGRDMQLGGNIGTAILTLEPPCADRFYVVECSSYQIDLAPSLNPTAGILLNLTPDHLDRHGSMENYAAIKERLVAASGTAIIGIDDAYCQAIADRLHGAGIRVVRISKEKHLDRGYFADGAKLLWAQDGEIDEIASLEGIGSLRGAHNAQNALAAIVACLSAGLSLEEIHAGLKSFPGLAHRMEQVGRRGKVLFVNDSKATNAEATAPALSSFPQNIYWIVGGVPKAGGINSLTAFFPRVAKAYLIGEAAAQFAATLGGAVPFEISDTLAAAVAHAAGDAGNDAAPEPVVLLSPACASFDQFQNFEKRGDAFRDAVLALPGVMPMRGES.

Residue 121 to 127 coordinates ATP; sequence GTNGKST.

This sequence belongs to the MurCDEF family.

Its subcellular location is the cytoplasm. The enzyme catalyses UDP-N-acetyl-alpha-D-muramoyl-L-alanine + D-glutamate + ATP = UDP-N-acetyl-alpha-D-muramoyl-L-alanyl-D-glutamate + ADP + phosphate + H(+). It participates in cell wall biogenesis; peptidoglycan biosynthesis. In terms of biological role, cell wall formation. Catalyzes the addition of glutamate to the nucleotide precursor UDP-N-acetylmuramoyl-L-alanine (UMA). The protein is UDP-N-acetylmuramoylalanine--D-glutamate ligase of Brucella suis biovar 1 (strain 1330).